The chain runs to 290 residues: Diaminopimelate epimerase (290 aa).

The substrate site is built by asparagine 11 and asparagine 78. Cysteine 87 functions as the Proton donor in the catalytic mechanism. Substrate contacts are provided by residues glycine 88 to asparagine 89, asparagine 163, asparagine 199, and glutamate 217 to arginine 218. Catalysis depends on cysteine 226, which acts as the Proton acceptor. Residue glycine 227–threonine 228 participates in substrate binding.

Belongs to the diaminopimelate epimerase family. As to quaternary structure, homodimer.

The protein resides in the cytoplasm. It catalyses the reaction (2S,6S)-2,6-diaminopimelate = meso-2,6-diaminopimelate. The protein operates within amino-acid biosynthesis; L-lysine biosynthesis via DAP pathway; DL-2,6-diaminopimelate from LL-2,6-diaminopimelate: step 1/1. Functionally, catalyzes the stereoinversion of LL-2,6-diaminopimelate (L,L-DAP) to meso-diaminopimelate (meso-DAP), a precursor of L-lysine and an essential component of the bacterial peptidoglycan. The chain is Diaminopimelate epimerase from Mycobacterium ulcerans (strain Agy99).